The primary structure comprises 550 residues: Chaperonin GroEL (550 aa).

ATP-binding positions include 30–33 (TLGP), K51, 87–91 (DGTTT), G415, 479–481 (NAA), and D495.

Belongs to the chaperonin (HSP60) family. As to quaternary structure, forms a cylinder of 14 subunits composed of two heptameric rings stacked back-to-back. Interacts with the co-chaperonin GroES.

It localises to the cytoplasm. It carries out the reaction ATP + H2O + a folded polypeptide = ADP + phosphate + an unfolded polypeptide.. Together with its co-chaperonin GroES, plays an essential role in assisting protein folding. The GroEL-GroES system forms a nano-cage that allows encapsulation of the non-native substrate proteins and provides a physical environment optimized to promote and accelerate protein folding. This Polaromonas sp. (strain JS666 / ATCC BAA-500) protein is Chaperonin GroEL.